Consider the following 394-residue polypeptide: Elongation factor Tu (394 aa).

The region spanning 10 to 204 (KPHINVGTIG…AMDNYIPIPE (195 aa)) is the tr-type G domain. Residues 19–26 (GHVDHGKT) are G1. 19–26 (GHVDHGKT) contributes to the GTP binding site. T26 is a binding site for Mg(2+). A G2 region spans residues 60 to 64 (GITIN). Positions 81 to 84 (DCPG) are G3. GTP contacts are provided by residues 81-85 (DCPGH) and 136-139 (NKVD). The G4 stretch occupies residues 136–139 (NKVD). Positions 174 to 176 (SAL) are G5.

This sequence belongs to the TRAFAC class translation factor GTPase superfamily. Classic translation factor GTPase family. EF-Tu/EF-1A subfamily. In terms of assembly, monomer.

The protein resides in the cytoplasm. The catalysed reaction is GTP + H2O = GDP + phosphate + H(+). GTP hydrolase that promotes the GTP-dependent binding of aminoacyl-tRNA to the A-site of ribosomes during protein biosynthesis. This Methylacidiphilum infernorum (isolate V4) (Methylokorus infernorum (strain V4)) protein is Elongation factor Tu.